Reading from the N-terminus, the 56-residue chain is Aspartyl-phosphate phosphatase YisI (56 aa).

Belongs to the spo0E family.

Aspartyl-phosphate phosphatase which specifically dephosphorylates the sporulation transcription factor Spo0A-P and negatively regulates the sporulation initiation pathway in order to control the proper timing of sporulation. This is Aspartyl-phosphate phosphatase YisI (yisI) from Bacillus subtilis (strain 168).